The following is a 312-amino-acid chain: Very-long-chain 3-oxoacyl-CoA reductase (312 aa).

A helical transmembrane segment spans residues Ala4–Leu24. Gly50–Leu79 serves as a coordination point for NADP(+). The next 2 helical transmembrane spans lie at Gly182–Tyr202 and Gly271–Leu291. Ser189 serves as a coordination point for substrate. Tyr202 (proton acceptor) is an active-site residue. The Di-lysine motif motif lies at Lys308 to Asn312.

This sequence belongs to the short-chain dehydrogenases/reductases (SDR) family. 17-beta-HSD 3 subfamily. In terms of assembly, interacts with ELOVL1 and LASS2. In terms of tissue distribution, expressed in most tissues tested. Highly expressed in the ovary and mammary. Expressed in platelets.

The protein resides in the endoplasmic reticulum membrane. It carries out the reaction a very-long-chain (3R)-3-hydroxyacyl-CoA + NADP(+) = a very-long-chain 3-oxoacyl-CoA + NADPH + H(+). The enzyme catalyses 17beta-estradiol + NAD(+) = estrone + NADH + H(+). The catalysed reaction is 17beta-estradiol + NADP(+) = estrone + NADPH + H(+). It catalyses the reaction 3-oxooctadecanoyl-CoA + NADPH + H(+) = (3R)-hydroxyoctadecanoyl-CoA + NADP(+). It carries out the reaction (7Z,10Z,13Z,16Z)-3-oxodocosatetraenoyl-CoA + NADPH + H(+) = (3R)-hydroxy-(7Z,10Z,13Z,16Z)-docosatetraenoyl-CoA + NADP(+). The enzyme catalyses 3-oxo-(7Z,10Z,13Z,16Z,19Z)-docosapentaenoyl-CoA + NADPH + H(+) = (3R)-hydroxy-(7Z,10Z,13Z,16Z,19Z)-docosapentaenoyl-CoA + NADP(+). The catalysed reaction is (8Z,11Z,14Z)-3-oxoeicosatrienoyl-CoA + NADPH + H(+) = (3R)-hydroxy-(8Z,11Z,14Z)-eicosatrienoyl-CoA + NADP(+). Its pathway is lipid metabolism; fatty acid biosynthesis. It participates in steroid biosynthesis; estrogen biosynthesis. Functionally, catalyzes the second of the four reactions of the long-chain fatty acids elongation cycle. This endoplasmic reticulum-bound enzymatic process, allows the addition of two carbons to the chain of long- and very long-chain fatty acids/VLCFAs per cycle. This enzyme has a 3-ketoacyl-CoA reductase activity, reducing 3-ketoacyl-CoA to 3-hydroxyacyl-CoA, within each cycle of fatty acid elongation. Thereby, it may participate in the production of VLCFAs of different chain lengths that are involved in multiple biological processes as precursors of membrane lipids and lipid mediators. May also catalyze the transformation of estrone (E1) into estradiol (E2) and play a role in estrogen formation. The sequence is that of Very-long-chain 3-oxoacyl-CoA reductase from Homo sapiens (Human).